The chain runs to 227 residues: UPF0173 metal-dependent hydrolase BCE33L4354 (227 aa).

Belongs to the UPF0173 family.

This chain is UPF0173 metal-dependent hydrolase BCE33L4354, found in Bacillus cereus (strain ZK / E33L).